The sequence spans 502 residues: Betaine aldehyde dehydrogenase, chloroplastic (502 aa).

A chloroplast-targeting transit peptide spans 1-7 (MAFPIPA). Position 240 to 245 (240 to 245 (GSSATG)) interacts with NAD(+). The active-site Proton acceptor is the glutamate 262. Cysteine 296 acts as the Nucleophile in catalysis.

Belongs to the aldehyde dehydrogenase family. As to quaternary structure, homodimer.

Its subcellular location is the plastid. The protein resides in the chloroplast. The catalysed reaction is betaine aldehyde + NAD(+) + H2O = glycine betaine + NADH + 2 H(+). Its pathway is amine and polyamine biosynthesis; betaine biosynthesis via choline pathway; betaine from betaine aldehyde: step 1/1. This is Betaine aldehyde dehydrogenase, chloroplastic from Atriplex hortensis (Mountain spinach).